Reading from the N-terminus, the 488-residue chain is MWESKFSKEGLTFDDVLLVPAKSEVLPRDVDLSVELTKTLKLNIPVISAGMDTVTESAMAIAMARQGGLGIIHKNMSIEQQAEQVDKVKRSERGVITNPFFLTPDHQVFDAEHLMGKYRISGVPIVNNEEDQKLVGIITNRDLRFISDYSMKISDVMTKEELVTASVGTTLDEAEKILQKHKIEKLPLVDDQNKLKGLITIKDIEKVIEFPNSSKDIHGRLIVGAAVGVTGDTMTRVKKLVEANVDVIVIDTAHGHSQGVLNTVTKIRETYPELNIIAGNVATAEATRALIEAGADVVKVGIGPGSICTTRVVAGVGVPQITAIYDCATEARKHGKTIIADGGIKFSGDITKALAAGGHAVMLGSLLAGTSESPGETEIYQGRRFKVYRGMGSVAAMEKGSKDRYFQEENKKFVPEGIEGRTPYKGPVEETVYQLVGGLRSGMGYCGSKDLRALREEAQFIRMTGAGLRESHPHDVQITKESPNYTIS.

CBS domains follow at residues 95-153 (VITN…SMKI) and 157-214 (MTKE…PNSS). NAD(+) is bound by residues Asp251 and 301–303 (GIG). Gly303 and Gly305 together coordinate K(+). Ser306 lines the IMP pocket. Residue Cys308 coordinates K(+). Cys308 acts as the Thioimidate intermediate in catalysis. IMP-binding positions include 341 to 343 (DGG), 364 to 365 (GS), and 388 to 392 (YRGMG). Catalysis depends on Arg404, which acts as the Proton acceptor. Glu416 is a binding site for IMP. K(+) is bound by residues Glu470, Ser471, and His472.

This sequence belongs to the IMPDH/GMPR family. Homotetramer. Requires K(+) as cofactor.

The enzyme catalyses IMP + NAD(+) + H2O = XMP + NADH + H(+). It participates in purine metabolism; XMP biosynthesis via de novo pathway; XMP from IMP: step 1/1. Mycophenolic acid (MPA) is a non-competitive inhibitor that prevents formation of the closed enzyme conformation by binding to the same site as the amobile flap. In contrast, mizoribine monophosphate (MZP) is a competitive inhibitor that induces the closed conformation. MPA is a potent inhibitor of mammalian IMPDHs but a poor inhibitor of the bacterial enzymes. MZP is a more potent inhibitor of bacterial IMPDH. Its function is as follows. Catalyzes the conversion of inosine 5'-phosphate (IMP) to xanthosine 5'-phosphate (XMP), the first committed and rate-limiting step in the de novo synthesis of guanine nucleotides, and therefore plays an important role in the regulation of cell growth. The sequence is that of Inosine-5'-monophosphate dehydrogenase from Bacillus subtilis (strain 168).